The chain runs to 1071 residues: ATP-dependent helicase/deoxyribonuclease subunit B (1071 aa).

Belongs to the helicase family. AddB/RexB type 2 subfamily. In terms of assembly, heterodimer of AddA and RexB. Mg(2+) is required as a cofactor.

The heterodimer acts as both an ATP-dependent DNA helicase and an ATP-dependent, dual-direction single-stranded exonuclease. Recognizes the chi site generating a DNA molecule suitable for the initiation of homologous recombination. This subunit has 5' -&gt; 3' nuclease activity but not helicase activity. The polypeptide is ATP-dependent helicase/deoxyribonuclease subunit B (Streptococcus pyogenes serotype M12 (strain MGAS9429)).